We begin with the raw amino-acid sequence, 253 residues long: Probable transcriptional regulatory protein Krad_3057 (253 aa).

Belongs to the TACO1 family.

Its subcellular location is the cytoplasm. The sequence is that of Probable transcriptional regulatory protein Krad_3057 from Kineococcus radiotolerans (strain ATCC BAA-149 / DSM 14245 / SRS30216).